Here is a 576-residue protein sequence, read N- to C-terminus: Arginine--tRNA ligase (576 aa).

The 'HIGH' region motif lies at 123–133; it reads PNIGKEMHVGH.

The protein belongs to the class-I aminoacyl-tRNA synthetase family. Monomer.

It localises to the cytoplasm. It carries out the reaction tRNA(Arg) + L-arginine + ATP = L-arginyl-tRNA(Arg) + AMP + diphosphate. The protein is Arginine--tRNA ligase of Wigglesworthia glossinidia brevipalpis.